Consider the following 101-residue polypeptide: Small ribosomal subunit protein uS10 (101 aa).

It belongs to the universal ribosomal protein uS10 family. Part of the 30S ribosomal subunit.

Its function is as follows. Involved in the binding of tRNA to the ribosomes. The protein is Small ribosomal subunit protein uS10 of Flavobacterium psychrophilum (strain ATCC 49511 / DSM 21280 / CIP 103535 / JIP02/86).